Here is a 78-residue protein sequence, read N- to C-terminus: Spermatid-specific protein T1 (78 aa).

The tract at residues 1-21 (MKVAANSSKMLAEKLELMKGG) is hydrophobic. A disordered region spans residues 1–78 (MKVAANSSKM…YSRRRYRRRR (78 aa)). The segment covering 20-78 (GGRRRRRRSRRRRRRSRRRSRSPYRRRYRRRRRRRRRRSRRRRYRRRRSYSRRRYRRRR) has biased composition (basic residues).

Phosphorylation occurs at different degrees. The triphosphorylated form may be predominant in T1. SP1 appears to be phosphorylated in elongated spermatids, but dephosphorylated in mature sperm cells. Testis.

The protein resides in the nucleus. It is found in the chromosome. In terms of biological role, cuttlefish spermiogenesis is characterized by a double nuclear protein transition: histones -&gt; spermatid-specific proteins (T1/T2) -&gt; protamines (SP1/SP2). The protamines compact sperm DNA into a highly condensed, stable and inactive complex. This chain is Spermatid-specific protein T1, found in Sepia officinalis (Common cuttlefish).